Reading from the N-terminus, the 572-residue chain is NADH-ubiquinone oxidoreductase chain 5 (572 aa).

16 helical membrane-spanning segments follow: residues 4–24 (ISFV…LYFL), 44–64 (IVMT…VLMI), 86–106 (IMLV…PNLI), 107–127 (SILL…IYFQ), 147–167 (VALL…YIFY), 170–190 (IMQN…AAMT), 217–237 (SSTL…ILST), 239–259 (WLGQ…GLGA), 268–288 (IIAL…SMGF), 294–314 (FHLL…GAII), 337–357 (SACF…AGFY), 372–394 (NMFS…FRLV), 422–442 (MGLL…IFPF), 457–477 (LFVC…NLFF), 490–510 (FLGS…FYPL), and 552–572 (LKIY…LLFL).

It belongs to the complex I subunit 5 family.

It localises to the mitochondrion inner membrane. The catalysed reaction is a ubiquinone + NADH + 5 H(+)(in) = a ubiquinol + NAD(+) + 4 H(+)(out). Its function is as follows. Core subunit of the mitochondrial membrane respiratory chain NADH dehydrogenase (Complex I) that is believed to belong to the minimal assembly required for catalysis. Complex I functions in the transfer of electrons from NADH to the respiratory chain. The immediate electron acceptor for the enzyme is believed to be ubiquinone. This Drosophila melanogaster (Fruit fly) protein is NADH-ubiquinone oxidoreductase chain 5 (mt:ND5).